Consider the following 482-residue polypeptide: tRNA(Ile)-lysidine synthase (482 aa).

An ATP-binding site is contributed by 28–33 (SGGPDS).

This sequence belongs to the tRNA(Ile)-lysidine synthase family.

Its subcellular location is the cytoplasm. The catalysed reaction is cytidine(34) in tRNA(Ile2) + L-lysine + ATP = lysidine(34) in tRNA(Ile2) + AMP + diphosphate + H(+). Ligates lysine onto the cytidine present at position 34 of the AUA codon-specific tRNA(Ile) that contains the anticodon CAU, in an ATP-dependent manner. Cytidine is converted to lysidine, thus changing the amino acid specificity of the tRNA from methionine to isoleucine. This Symbiobacterium thermophilum (strain DSM 24528 / JCM 14929 / IAM 14863 / T) protein is tRNA(Ile)-lysidine synthase.